Reading from the N-terminus, the 95-residue chain is Large ribosomal subunit protein bL28 (95 aa).

The segment at 1–28 (MARKRTLGGKAPQAGNKVSHSQRKTRRQ) is disordered.

It belongs to the bacterial ribosomal protein bL28 family.

This Magnetococcus marinus (strain ATCC BAA-1437 / JCM 17883 / MC-1) protein is Large ribosomal subunit protein bL28.